A 128-amino-acid polypeptide reads, in one-letter code: Large ribosomal subunit protein bL20c (128 aa).

It belongs to the bacterial ribosomal protein bL20 family. In terms of assembly, component of the chloroplast large ribosomal subunit (LSU). Mature 70S chloroplast ribosomes of higher plants consist of a small (30S) and a large (50S) subunit. The 30S small subunit contains 1 molecule of ribosomal RNA (16S rRNA) and 24 different proteins. The 50S large subunit contains 3 rRNA molecules (23S, 5S and 4.5S rRNA) and 33 different proteins.

Its subcellular location is the plastid. It localises to the chloroplast. Its function is as follows. Component of the chloroplast ribosome (chloro-ribosome), a dedicated translation machinery responsible for the synthesis of chloroplast genome-encoded proteins, including proteins of the transcription and translation machinery and components of the photosynthetic apparatus. The protein is Large ribosomal subunit protein bL20c (rpl20) of Spinacia oleracea (Spinach).